A 282-amino-acid polypeptide reads, in one-letter code: Bis(5'-nucleosyl)-tetraphosphatase, symmetrical (282 aa).

The protein belongs to the Ap4A hydrolase family.

It catalyses the reaction P(1),P(4)-bis(5'-adenosyl) tetraphosphate + H2O = 2 ADP + 2 H(+). In terms of biological role, hydrolyzes diadenosine 5',5'''-P1,P4-tetraphosphate to yield ADP. The chain is Bis(5'-nucleosyl)-tetraphosphatase, symmetrical from Klebsiella pneumoniae (strain 342).